A 51-amino-acid chain; its full sequence is Large ribosomal subunit protein bL33 (51 aa).

Positions 1-24 are disordered; sequence MREKIRLNSSAGTGHFYTTDKNKR.

Belongs to the bacterial ribosomal protein bL33 family.

The polypeptide is Large ribosomal subunit protein bL33 (Cellvibrio japonicus (strain Ueda107) (Pseudomonas fluorescens subsp. cellulosa)).